A 236-amino-acid chain; its full sequence is ATP-dependent dethiobiotin synthetase BioD (236 aa).

Residue T19 coordinates Mg(2+). K40 is an active-site residue. Mg(2+)-binding residues include D61 and E122. ATP is bound by residues D61, 122–125 (EGVG), 182–183 (NT), and 211–213 (PRL).

This sequence belongs to the dethiobiotin synthetase family. In terms of assembly, homodimer. Mg(2+) is required as a cofactor.

The protein localises to the cytoplasm. It carries out the reaction (7R,8S)-7,8-diammoniononanoate + CO2 + ATP = (4R,5S)-dethiobiotin + ADP + phosphate + 3 H(+). It functions in the pathway cofactor biosynthesis; biotin biosynthesis; biotin from 7,8-diaminononanoate: step 1/2. Its function is as follows. Catalyzes a mechanistically unusual reaction, the ATP-dependent insertion of CO2 between the N7 and N8 nitrogen atoms of 7,8-diaminopelargonic acid (DAPA, also called 7,8-diammoniononanoate) to form a ureido ring. The sequence is that of ATP-dependent dethiobiotin synthetase BioD from Janthinobacterium sp. (strain Marseille) (Minibacterium massiliensis).